The following is a 297-amino-acid chain: Urease accessory protein UreD (297 aa).

Over residues 1-18 (MNSSAASPPAVSPHAAPS) the composition is skewed to low complexity. 2 disordered regions span residues 1-20 (MNSS…PSRT) and 178-201 (VDQA…PRRR).

This sequence belongs to the UreD family. In terms of assembly, ureD, UreF and UreG form a complex that acts as a GTP-hydrolysis-dependent molecular chaperone, activating the urease apoprotein by helping to assemble the nickel containing metallocenter of UreC. The UreE protein probably delivers the nickel.

It localises to the cytoplasm. Required for maturation of urease via the functional incorporation of the urease nickel metallocenter. In Parafrankia sp. (strain EAN1pec), this protein is Urease accessory protein UreD.